Here is a 754-residue protein sequence, read N- to C-terminus: DNA topoisomerase 4 subunit A (754 aa).

Positions 38–501 (LPHIGDGLKP…EARALSETEL (464 aa)) constitute a Topo IIA-type catalytic domain. Tyrosine 127 functions as the O-(5'-phospho-DNA)-tyrosine intermediate in the catalytic mechanism.

The protein belongs to the type II topoisomerase GyrA/ParC subunit family. ParC type 1 subfamily. As to quaternary structure, heterotetramer composed of ParC and ParE.

Its subcellular location is the cell membrane. It carries out the reaction ATP-dependent breakage, passage and rejoining of double-stranded DNA.. Topoisomerase IV is essential for chromosome segregation. It relaxes supercoiled DNA. Performs the decatenation events required during the replication of a circular DNA molecule. The sequence is that of DNA topoisomerase 4 subunit A from Pseudomonas aeruginosa (strain ATCC 15692 / DSM 22644 / CIP 104116 / JCM 14847 / LMG 12228 / 1C / PRS 101 / PAO1).